A 139-amino-acid polypeptide reads, in one-letter code: Putative esterase PM0788 (139 aa).

The protein belongs to the thioesterase PaaI family.

The protein is Putative esterase PM0788 of Pasteurella multocida (strain Pm70).